A 524-amino-acid polypeptide reads, in one-letter code: Bifunctional NAD(P)H-hydrate repair enzyme Nnr (524 aa).

The NAD(P)H-hydrate epimerase stretch occupies residues 1–219 (MKVARVSEIK…ISYPRALLED (219 aa)). The 210-residue stretch at 9–218 (IKLLDREAAE…HISYPRALLE (210 aa)) folds into the YjeF N-terminal domain. The interval 57-61 (NNGGD) is NADPHX 1; for epimerase activity. K(+)-binding residues include asparagine 58 and aspartate 128. The NADPHX 1; for epimerase activity stretch occupies residues 132-138 (GTGLSRP). Positions 143 and 161 each coordinate (6S)-NADPHX. Residue serine 164 participates in K(+) binding. The YjeF C-terminal domain maps to 224 to 507 (VETNDPVPLP…NYLPKALRAL (284 aa)). The interval 224–524 (VETNDPVPLP…LERYTIKVLP (301 aa)) is ADP-dependent (S)-NAD(P)H-hydrate dehydratase. (6S)-NADPHX is bound at residue glycine 330. The NADPHX 2; for dehydratase activity stretch occupies residues 381-387 (HAGEMSR). Residues 418–422 (KGAHT) and 438–447 (NPGMATAGSG) each bind ADP. Aspartate 448 serves as a coordination point for (6S)-NADPHX.

It in the N-terminal section; belongs to the NnrE/AIBP family. This sequence in the C-terminal section; belongs to the NnrD/CARKD family. It depends on K(+) as a cofactor.

The catalysed reaction is (6S)-NADHX + ADP = AMP + phosphate + NADH + H(+). It catalyses the reaction (6S)-NADPHX + ADP = AMP + phosphate + NADPH + H(+). It carries out the reaction (6R)-NADHX = (6S)-NADHX. The enzyme catalyses (6R)-NADPHX = (6S)-NADPHX. Functionally, bifunctional enzyme that catalyzes the epimerization of the S- and R-forms of NAD(P)HX and the dehydration of the S-form of NAD(P)HX at the expense of ADP, which is converted to AMP. This allows the repair of both epimers of NAD(P)HX, a damaged form of NAD(P)H that is a result of enzymatic or heat-dependent hydration. This chain is Bifunctional NAD(P)H-hydrate repair enzyme Nnr (nnr), found in Thermofilum pendens (strain DSM 2475 / Hrk 5).